The following is a 519-amino-acid chain: Sugar transport protein MST5 (519 aa).

The Cytoplasmic portion of the chain corresponds to 1-18 (MAGGAMVQTVGGKTYPGK). A helical transmembrane segment spans residues 19-39 (MTAFVFFTCLVASSGGLIFGY). The Extracellular segment spans residues 40–80 (DIGISGGVTSMDSFLSEFFPSVYAQAKASKDTNQYCKFDSQ). The helical transmembrane segment at 81–101 (LLTLFTSSLYLAALATSFVAA) threads the bilayer. The Cytoplasmic portion of the chain corresponds to 102-110 (WVTRVFGRK). The chain crosses the membrane as a helical span at residues 111–127 (WSMFCGGVTFLAGSALN). Position 128 (glycine 128) is a topological domain, extracellular. Residues 129–149 (AATDVMMLILGRILLGIGVGF) traverse the membrane as a helical segment. The Cytoplasmic portion of the chain corresponds to 150–167 (ANQSVPLYLSEMAPANLR). Residues 168 to 188 (GMLNIGFQLMTTIGILSANLI) traverse the membrane as a helical segment. Residues 189-202 (NYATSSIEGGWGWR) lie on the Extracellular side of the membrane. Residues 203-223 (IGLGLAGVPALIITLGALVLP) traverse the membrane as a helical segment. The Cytoplasmic portion of the chain corresponds to 224-295 (DTPNSLIARG…IAILIPCFQQ (72 aa)). A helical membrane pass occupies residues 296–316 (LTGINVIMFYAPVLFLTIGFA). At 317–321 (GDASL) the chain is on the extracellular side. Residues 322 to 342 (MSAVITGLVNMFATVVSIISV) form a helical membrane-spanning segment. Topologically, residues 343-357 (DRLGRRVLFLQGGTQ) are cytoplasmic. Residues 358–378 (MFISQVVVGTLIALQFGVAGV) form a helical membrane-spanning segment. The Extracellular portion of the chain corresponds to 379 to 386 (GEMSRSYA). The chain crosses the membrane as a helical span at residues 387–407 (ILLVLFICMYVAGFAWSWGPL). The Cytoplasmic segment spans residues 408-426 (GWLVPSEVFALEIRSAGQS). The helical transmembrane segment at 427–447 (IAVCVNMMLTFVIGQAFLTML) threads the bilayer. The Extracellular portion of the chain corresponds to 448–451 (CHLK). A helical transmembrane segment spans residues 452 to 472 (FGLFYFFAGWMLVMTTFVALF). The Cytoplasmic portion of the chain corresponds to 473 to 519 (LPETKGVPIEEMNHVWSRHWFWGSYVTAHDVAGAGAGGGGNRRSHNV).

The protein belongs to the major facilitator superfamily. Sugar transporter (TC 2.A.1.1) family. In terms of tissue distribution, expressed in panicles before heading. Expressed in flowers before pollination.

Its subcellular location is the membrane. Its function is as follows. Mediates active uptake of hexoses by sugar:proton symport. Can transport glucose, xylose and 3-O-methylglucose. May play a role at the early stage of seed development. This Oryza sativa subsp. japonica (Rice) protein is Sugar transport protein MST5.